Consider the following 205-residue polypeptide: Putative 3-methyladenine DNA glycosylase (205 aa).

Belongs to the DNA glycosylase MPG family.

This chain is Putative 3-methyladenine DNA glycosylase, found in Bacillus cereus (strain B4264).